The primary structure comprises 89 residues: Cell division topological specificity factor (89 aa).

This sequence belongs to the MinE family.

Functionally, prevents the cell division inhibition by proteins MinC and MinD at internal division sites while permitting inhibition at polar sites. This ensures cell division at the proper site by restricting the formation of a division septum at the midpoint of the long axis of the cell. This chain is Cell division topological specificity factor, found in Brucella anthropi (strain ATCC 49188 / DSM 6882 / CCUG 24695 / JCM 21032 / LMG 3331 / NBRC 15819 / NCTC 12168 / Alc 37) (Ochrobactrum anthropi).